A 332-amino-acid chain; its full sequence is Lipoyl synthase (332 aa).

Positions 55, 60, 66, 81, 85, 88, and 292 each coordinate [4Fe-4S] cluster. One can recognise a Radical SAM core domain in the interval 67-281; the sequence is WEDREATFLI…SDEAERIGFL (215 aa).

Belongs to the radical SAM superfamily. Lipoyl synthase family. [4Fe-4S] cluster is required as a cofactor.

Its subcellular location is the cytoplasm. It catalyses the reaction [[Fe-S] cluster scaffold protein carrying a second [4Fe-4S](2+) cluster] + N(6)-octanoyl-L-lysyl-[protein] + 2 oxidized [2Fe-2S]-[ferredoxin] + 2 S-adenosyl-L-methionine + 4 H(+) = [[Fe-S] cluster scaffold protein] + N(6)-[(R)-dihydrolipoyl]-L-lysyl-[protein] + 4 Fe(3+) + 2 hydrogen sulfide + 2 5'-deoxyadenosine + 2 L-methionine + 2 reduced [2Fe-2S]-[ferredoxin]. The protein operates within protein modification; protein lipoylation via endogenous pathway; protein N(6)-(lipoyl)lysine from octanoyl-[acyl-carrier-protein]: step 2/2. In terms of biological role, catalyzes the radical-mediated insertion of two sulfur atoms into the C-6 and C-8 positions of the octanoyl moiety bound to the lipoyl domains of lipoate-dependent enzymes, thereby converting the octanoylated domains into lipoylated derivatives. The sequence is that of Lipoyl synthase from Beutenbergia cavernae (strain ATCC BAA-8 / DSM 12333 / CCUG 43141 / JCM 11478 / NBRC 16432 / NCIMB 13614 / HKI 0122).